The following is a 196-amino-acid chain: Elongation factor Ts (196 aa).

An involved in Mg(2+) ion dislocation from EF-Tu region spans residues Thr-80 to Val-83.

This sequence belongs to the EF-Ts family. Heterotetramer composed of two EF-Ts.EF-Tu dimer complexes.

Its subcellular location is the cytoplasm. Associates with the EF-Tu.GDP complex and induces the exchange of GDP to GTP. It remains bound to the aminoacyl-tRNA.EF-Tu.GTP complex up to the GTP hydrolysis stage on the ribosome. This Thermus thermophilus (strain ATCC 27634 / DSM 579 / HB8) protein is Elongation factor Ts (tsf).